Reading from the N-terminus, the 150-residue chain is Endoribonuclease YbeY (150 aa).

His-102, His-106, and His-112 together coordinate Zn(2+).

This sequence belongs to the endoribonuclease YbeY family. Zn(2+) serves as cofactor.

The protein localises to the cytoplasm. Functionally, single strand-specific metallo-endoribonuclease involved in late-stage 70S ribosome quality control and in maturation of the 3' terminus of the 16S rRNA. In Thermotoga sp. (strain RQ2), this protein is Endoribonuclease YbeY.